A 521-amino-acid polypeptide reads, in one-letter code: Cytochrome P450 monooxygenase bet2 (521 aa).

Residues Ser23–Val43 traverse the membrane as a helical segment. Residue Asn188 is glycosylated (N-linked (GlcNAc...) asparagine). Cys461 contacts heme.

The protein belongs to the cytochrome P450 family. Heme is required as a cofactor.

It is found in the membrane. The catalysed reaction is dehydroprobetaenone I + NADPH + O2 + H(+) = epoxybetaenone + NADP(+) + H2O. It catalyses the reaction dehydroprobetaenone I + 3 NADPH + 3 O2 + 3 H(+) = betaenone C + 3 NADP(+) + 3 H2O. It functions in the pathway mycotoxin biosynthesis. In terms of biological role, cytochrome P450 monooxygenase; part of the gene cluster that mediates the biosynthesis of betaenones, phytotoxic polyketides involved in leaf spot disease in sugar beets. The first step of the pathway is the synthesis of dehydroprobetaenone I by the polyketide synthase bet1 and the enoyl reductase bet3 via condensation of one acetyl-CoA starter unit with 7 malonyl-CoA units and 5 methylations. The C-terminal reductase (R) domain of bet1 catalyzes the reductive release of the polyketide chain. Because bet1 lacks a designated enoylreductase (ER) domain, the required activity is provided the enoyl reductase bet3. The short-chain dehydrogenase/reductase bet4 then catalyzes reduction of dehydroprobetaenone I to probetaenone I. The cytochrome P450 monooxygenase bet2 catalyzes successive epoxidation, oxidation (resulting from epoxide opening) and hydroxylation to install a tertiary alcohol in the decaline ring to yield betaenone C from dehydroprobetaenone I and betaenone B from probetaenone I. The FAD-linked oxidoreductase (orf1) is probably responsible for the conversion of betaenone C to betaenone A via an intramolecular aldol reaction between C-1 and C-17 to form the bridged tricyclic system in betaenone A. The sequence is that of Cytochrome P450 monooxygenase bet2 from Neocamarosporium betae (Beet black rot fungus).